We begin with the raw amino-acid sequence, 150 residues long: Single-stranded DNA-binding protein 1 (150 aa).

An SSB domain is found at 1–104 (MINNVVLVGR…VVADTFQMLE (104 aa)). Positions 103–120 (LESNKTQGQQTSKPQAQN) are enriched in polar residues. The interval 103–150 (LESNKTQGQQTSKPQAQNKKPQAPDPFKAPAADPFAGGTEISDDDLPF) is disordered. A compositionally biased stretch (low complexity) spans 121 to 138 (KKPQAPDPFKAPAADPFA). The Important for interaction with partner proteins motif lies at 145-150 (DDDLPF).

In terms of assembly, homotetramer.

Functionally, plays an important role in DNA replication, recombination and repair. Binds to ssDNA and to an array of partner proteins to recruit them to their sites of action during DNA metabolism. The protein is Single-stranded DNA-binding protein 1 (ssb1) of Lactococcus lactis subsp. lactis (strain IL1403) (Streptococcus lactis).